Consider the following 563-residue polypeptide: Probable terpene synthase 4 (563 aa).

The Mg(2+) site is built by Asp-316, Asp-320, and Glu-469. A DDXXD motif motif is present at residues 316 to 320 (DDIFD).

Belongs to the terpene synthase family. Mg(2+) serves as cofactor.

Its function is as follows. Probable sesquiterpene synthase. The chain is Probable terpene synthase 4 (TPS4) from Ricinus communis (Castor bean).